A 962-amino-acid chain; its full sequence is Leucine--tRNA ligase (962 aa).

Residues 41–51 (PYLNGNLHAGH) carry the 'HIGH' region motif. The 'KMSKS' region signature appears at 631–635 (KMSKS). Lys634 contributes to the ATP binding site.

Belongs to the class-I aminoacyl-tRNA synthetase family.

Its subcellular location is the cytoplasm. The enzyme catalyses tRNA(Leu) + L-leucine + ATP = L-leucyl-tRNA(Leu) + AMP + diphosphate. The chain is Leucine--tRNA ligase from Methanococcoides burtonii (strain DSM 6242 / NBRC 107633 / OCM 468 / ACE-M).